The primary structure comprises 262 residues: Adenosylcobinamide-GDP ribazoletransferase (262 aa).

Transmembrane regions (helical) follow at residues 41 to 63 (AFPF…LMAL), 68 to 85 (LFAA…TGAL), 115 to 134 (IGTY…VSAF), 141 to 163 (FSPL…AMVW), and 201 to 221 (LLFY…VAFL).

This sequence belongs to the CobS family. As to quaternary structure, associated with a large complex of proteins. It depends on Mg(2+) as a cofactor.

The protein resides in the cell inner membrane. It catalyses the reaction alpha-ribazole + adenosylcob(III)inamide-GDP = adenosylcob(III)alamin + GMP + H(+). The catalysed reaction is alpha-ribazole 5'-phosphate + adenosylcob(III)inamide-GDP = adenosylcob(III)alamin 5'-phosphate + GMP + H(+). It functions in the pathway cofactor biosynthesis; adenosylcobalamin biosynthesis; adenosylcobalamin from cob(II)yrinate a,c-diamide: step 7/7. Its function is as follows. Joins adenosylcobinamide-GDP and alpha-ribazole to generate adenosylcobalamin (Ado-cobalamin). Also synthesizes adenosylcobalamin 5'-phosphate from adenosylcobinamide-GDP and alpha-ribazole 5'-phosphate. In Sinorhizobium sp, this protein is Adenosylcobinamide-GDP ribazoletransferase (cobV).